A 1954-amino-acid chain; its full sequence is Integrin beta-like protein C (1954 aa).

A signal peptide spans 1–20 (MNKLFYLFILIASLFILTDA). Residues 21–1883 (SHFRFGTISW…TTTQTNDNKT (1863 aa)) are Extracellular-facing. N-linked (GlcNAc...) asparagine glycans are attached at residues Asn-138 and Asn-354. The region spanning 428 to 465 (YGENCVAVPPCVNGVPNSGINGDGKCLCSNGWTGADCS) is the EGF-like domain. 2 disulfides stabilise this stretch: Cys-438–Cys-453 and Cys-455–Cys-464. N-linked (GlcNAc...) asparagine glycosylation is present at Asn-479. The VWFA domain maps to 521–706 (DVYVLVDANL…TGVKNVLSKI (186 aa)). N-linked (GlcNAc...) asparagine glycosylation is found at Asn-1348, Asn-1382, Asn-1628, Asn-1678, Asn-1742, Asn-1770, Asn-1820, Asn-1860, and Asn-1881. Residues 1884-1904 (VLTGAIAGAAAGTALIAAAAW) traverse the membrane as a helical segment. Residues 1905–1954 (RLLRKAAPPTDTFFSEAAFLGDGVSSNPLYEQSASAAENPLYQSASDTTD) lie on the Cytoplasmic side of the membrane.

It belongs to the SIB family. Interacts with talA/talin.

The protein resides in the membrane. Its function is as follows. Implicated in cellular adhesion. In Dictyostelium discoideum (Social amoeba), this protein is Integrin beta-like protein C (sibC).